A 169-amino-acid chain; its full sequence is MKPSSSNSRSKGHAKARRKTREELDQEARDRKRQKKRRGHAPGSRAAGGNTTSGSKGQNAPKDPRIGSKTPIPLGVIEKVTKQHKPKSEKPMLSPQAELELLETDERLDALLERLEAGETLSAEEQSWVDAKLDRIDELMQKLGLSYDDDEEEEEDEKQEDMMRLLRGN.

Disordered regions lie at residues 1–75 and 144–169; these read MKPS…IPLG and GLSYDDDEEEEEDEKQEDMMRLLRGN. A compositionally biased stretch (basic residues) spans 10–19; that stretch reads SKGHAKARRK. Basic and acidic residues predominate over residues 20–30; sequence TREELDQEARD. The span at 31-40 shows a compositional bias: basic residues; the sequence is RKRQKKRRGH. The span at 49–58 shows a compositional bias: polar residues; the sequence is GNTTSGSKGQ. A compositionally biased stretch (acidic residues) spans 147 to 159; that stretch reads YDDDEEEEEDEKQ. The span at 160–169 shows a compositional bias: basic and acidic residues; sequence EDMMRLLRGN.

Belongs to the YihI family. As to quaternary structure, interacts with Der.

A GTPase-activating protein (GAP) that modifies Der/EngA GTPase function. May play a role in ribosome biogenesis. This Escherichia coli (strain 55989 / EAEC) protein is Der GTPase-activating protein YihI.